Consider the following 196-residue polypeptide: Adenylate kinase (196 aa).

Residue 9–17 (GIPGVGKST) participates in ATP binding.

Belongs to the archaeal adenylate kinase family.

It localises to the cytoplasm. It catalyses the reaction AMP + ATP = 2 ADP. The polypeptide is Adenylate kinase (Pyrococcus furiosus (strain ATCC 43587 / DSM 3638 / JCM 8422 / Vc1)).